The primary structure comprises 152 residues: Probable flagellum biosynthesis repressor protein FlbT (152 aa).

The protein belongs to the FlbT family.

Has a post-transcriptional repressor function in flagellum biogenesis. Associates with the 5'-UTR of fljK mRNA and promotes its degradation. The protein is Probable flagellum biosynthesis repressor protein FlbT of Brucella anthropi (strain ATCC 49188 / DSM 6882 / CCUG 24695 / JCM 21032 / LMG 3331 / NBRC 15819 / NCTC 12168 / Alc 37) (Ochrobactrum anthropi).